The following is a 400-amino-acid chain: Argininosuccinate synthase (400 aa).

8–16 (AYSGGLDTS) contacts ATP. L-citrulline contacts are provided by tyrosine 87 and serine 92. Glycine 117 provides a ligand contact to ATP. 3 residues coordinate L-aspartate: threonine 119, asparagine 123, and aspartate 124. Position 123 (asparagine 123) interacts with L-citrulline. L-citrulline is bound by residues arginine 127, serine 175, glutamate 259, and tyrosine 271.

The protein belongs to the argininosuccinate synthase family. Type 1 subfamily. Homotetramer.

Its subcellular location is the cytoplasm. It catalyses the reaction L-citrulline + L-aspartate + ATP = 2-(N(omega)-L-arginino)succinate + AMP + diphosphate + H(+). It participates in amino-acid biosynthesis; L-arginine biosynthesis; L-arginine from L-ornithine and carbamoyl phosphate: step 2/3. This chain is Argininosuccinate synthase, found in Frankia alni (strain DSM 45986 / CECT 9034 / ACN14a).